Reading from the N-terminus, the 917-residue chain is Autophagy-related protein 9 (917 aa).

Over 1 to 226 (MASNIFSRLV…AGFWCIIVQR (226 aa)) the chain is Cytoplasmic. Disordered regions lie at residues 16–37 (RSFY…RAGI) and 119–177 (LLLS…QGRP). A helical transmembrane segment spans residues 227-247 (ILELVNAAFVAVFLTFLSQCV). At 248-275 (DYHKLPHSKKMEDIIIPKCTQNMSLVWN) the chain is on the lumenal side. N-linked (GlcNAc...) asparagine glycosylation is present at Asn269. Residues 276 to 296 (VGLWLFAIYFICRCFGLIIQL) traverse the membrane as a helical segment. Residues 297–442 (RQLKHLRDFY…RQLSQKLKSR (146 aa)) lie on the Cytoplasmic side of the membrane. The stretch at 443–463 (FFFAGLMIFVMSPFIALYLIL) is an intramembrane region. The Cytoplasmic portion of the chain corresponds to 464-539 (VYFLTYFHEF…ARTVSFITGS (76 aa)). Residues 540 to 560 (IVAVLGLATIFDSEAFLTFEI) traverse the membrane as a helical segment. At 561–564 (TPDR) the chain is on the lumenal side. The chain crosses the membrane as a helical span at residues 565–585 (SVLFYVSILATLWAVARGNIS). At 586 to 633 (DDNEVYDPEFAMKSIIEFTHYEPDHWRGRLHSTEVKNEFSELYKPRPQ) the chain is on the cytoplasmic side. Lys621 carries the N6-acetyllysine modification. An intramembrane segment occupies 634–654 (IFLEEILSILLTPLVLLVSLP). The Cytoplasmic segment spans residues 655–917 (NSTDQIVDFF…FQQAHMHLRR (263 aa)). Positions 854 to 895 (DARFGKLGDEDIDESGGALDESTWQTSPTKTLSRENSGANPQ) are disordered. The span at 875–895 (STWQTSPTKTLSRENSGANPQ) shows a compositional bias: polar residues.

This sequence belongs to the ATG9 family. In terms of assembly, homotrimer; forms a homotrimer with a central pore that forms a path between the two membrane leaflets. Interacts with HAT1. Post-translationally, acetylated by HAT1 at Lys-621, which increases the ability to bind vesicles during nutrient starvation induction. Phosphorylated by ATG1. ATG1 phosphorylation is required for preautophagosome elongation.

It is found in the preautophagosomal structure membrane. The protein localises to the cytoplasmic vesicle membrane. It localises to the vacuole membrane. Its subcellular location is the golgi apparatus membrane. The protein resides in the endoplasmic reticulum membrane. The enzyme catalyses a 1,2-diacyl-sn-glycero-3-phosphocholine(in) = a 1,2-diacyl-sn-glycero-3-phosphocholine(out). It carries out the reaction a 1,2-diacyl-sn-glycero-3-phospho-L-serine(in) = a 1,2-diacyl-sn-glycero-3-phospho-L-serine(out). The catalysed reaction is a 1,2-diacyl-sn-glycero-3-phosphoethanolamine(in) = a 1,2-diacyl-sn-glycero-3-phosphoethanolamine(out). It catalyses the reaction a 1,2-diacyl-sn-glycero-3-phospho-(1D-myo-inositol-3-phosphate)(in) = a 1,2-diacyl-sn-glycero-3-phospho-(1D-myo-inositol-3-phosphate)(out). In terms of biological role, phospholipid scramblase involved in autophagy and cytoplasm to vacuole transport (Cvt) vesicle formation. Cycles between the preautophagosomal structure/phagophore assembly site (PAS) and the cytoplasmic vesicle pool and supplies membrane for the growing autophagosome. Lipid scramblase activity plays a key role in preautophagosomal structure/phagophore assembly by distributing the phospholipids that arrive through ATG2 from the cytoplasmic to the luminal leaflet of the bilayer, thereby driving autophagosomal membrane expansion. Required for mitophagy. Also involved in endoplasmic reticulum-specific autophagic process and is essential for the survival of cells subjected to severe ER stress. Different machineries are required for anterograde trafficking to the PAS during either the Cvt pathway or bulk autophagy and for retrograde trafficking. Plays a role in appressorium formation and pathogenicity. In Pyricularia oryzae (strain 70-15 / ATCC MYA-4617 / FGSC 8958) (Rice blast fungus), this protein is Autophagy-related protein 9.